Here is a 733-residue protein sequence, read N- to C-terminus: Methylmalonyl-CoA mutase large subunit (733 aa).

The segment covering 1–10 has biased composition (acidic residues); that stretch reads MRIPEFDDIE. A disordered region spans residues 1–22; the sequence is MRIPEFDDIELGAGGGPSGSAE. (R)-methylmalonyl-CoA contacts are provided by tyrosine 78, methionine 81, threonine 88, arginine 90, tyrosine 92, and serine 117. 2 residues coordinate cob(II)alamin: phenylalanine 120 and alanine 142. (R)-methylmalonyl-CoA-binding residues include threonine 198 and glutamine 200. 2 residues coordinate cob(II)alamin: valine 209 and arginine 210. (R)-methylmalonyl-CoA is bound by residues arginine 210, histidine 247, arginine 286, and serine 288. 11 residues coordinate cob(II)alamin: glycine 336, glutamate 373, alanine 376, glycine 612, histidine 613, aspartate 614, arginine 615, serine 658, leucine 660, glycine 689, and threonine 712. One can recognise a B12-binding domain in the interval 600–732; it reads RPRILVAKMG…KRLAADLGHE (133 aa).

It belongs to the methylmalonyl-CoA mutase family. Heterodimer of an alpha and a beta chain. It depends on adenosylcob(III)alamin as a cofactor.

It carries out the reaction (R)-methylmalonyl-CoA = succinyl-CoA. Functionally, catalyzes the isomerization of succinyl-CoA to methylmalonyl-CoA during synthesis of propionate from tricarboxylic acid-cycle intermediates. This conversion most likely represents an important source of building blocks for polyketide antibiotic biosynthesis. It is unable to catalyze the conversion of isobutyryl-CoA into N-butyryl-CoA. In Streptomyces virginiae (Streptomyces cinnamonensis), this protein is Methylmalonyl-CoA mutase large subunit (mutB).